The sequence spans 706 residues: Polyribonucleotide nucleotidyltransferase (706 aa).

D486 and D492 together coordinate Mg(2+). The 60-residue stretch at 553 to 612 (PRIHTIKISTDKIKDVIGKGGSVIRALTEETGTTIEIEDDGTVRIASTDGEKAKHAIRRI) folds into the KH domain. Residues 622–690 (GRVYQGKVTR…RQGRVRLSIK (69 aa)) enclose the S1 motif domain.

This sequence belongs to the polyribonucleotide nucleotidyltransferase family. Component of the RNA degradosome, which is a multiprotein complex involved in RNA processing and mRNA degradation. It depends on Mg(2+) as a cofactor.

It is found in the cytoplasm. It catalyses the reaction RNA(n+1) + phosphate = RNA(n) + a ribonucleoside 5'-diphosphate. Functionally, involved in mRNA degradation. Catalyzes the phosphorolysis of single-stranded polyribonucleotides processively in the 3'- to 5'-direction. The protein is Polyribonucleotide nucleotidyltransferase of Pectobacterium atrosepticum (strain SCRI 1043 / ATCC BAA-672) (Erwinia carotovora subsp. atroseptica).